Here is a 474-residue protein sequence, read N- to C-terminus: Glutathione synthetase (474 aa).

Alanine 2 is modified (N-acetylalanine). Residue arginine 125 coordinates substrate. ATP is bound at residue glutamate 144. Mg(2+)-binding residues include glutamate 144 and asparagine 146. Residues 148-151, 214-216, glutamine 220, and 267-270 contribute to the substrate site; these read ISAS, ERN, and RDGY. ATP-binding positions include lysine 305, 364 to 373, tyrosine 375, and 398 to 401; these read KPQREGGGNN and MEKI. Mg(2+) is bound at residue glutamate 368. Position 415 is a phosphoserine (serine 415). Glutamate 425 lines the ATP pocket. Arginine 450 provides a ligand contact to substrate. Residues lysine 452 and aspartate 458 each coordinate ATP. 461 to 462 serves as a coordination point for substrate; sequence VA.

It belongs to the eukaryotic GSH synthase family. In terms of assembly, homodimer. Mg(2+) serves as cofactor.

The enzyme catalyses gamma-L-glutamyl-L-cysteine + glycine + ATP = glutathione + ADP + phosphate + H(+). The catalysed reaction is gamma-L-glutamyl-(2S)-2-aminobutanoate + glycine + ATP = ophthalmate + ADP + phosphate + H(+). It functions in the pathway sulfur metabolism; glutathione biosynthesis; glutathione from L-cysteine and L-glutamate: step 2/2. Catalyzes the production of glutathione from gamma-glutamylcysteine and glycine in an ATP-dependent manner. Glutathione (gamma-glutamylcysteinylglycine, GSH) is the most abundant intracellular thiol in living aerobic cells and is required for numerous processes including the protection of cells against oxidative damage, amino acid transport, the detoxification of foreign compounds, the maintenance of protein sulfhydryl groups in a reduced state and acts as a cofactor for a number of enzymes. Participates in ophthalmate biosynthesis in hepatocytes. This is Glutathione synthetase from Mus musculus (Mouse).